Consider the following 211-residue polypeptide: Uracil phosphoribosyltransferase (211 aa).

5-phospho-alpha-D-ribose 1-diphosphate-binding positions include R78, R103, and 130–138; that span reads DPMLATGGT. Uracil is bound by residues I196 and 201 to 203; that span reads GDA. D202 is a binding site for 5-phospho-alpha-D-ribose 1-diphosphate.

The protein belongs to the UPRTase family. Mg(2+) is required as a cofactor.

It catalyses the reaction UMP + diphosphate = 5-phospho-alpha-D-ribose 1-diphosphate + uracil. The protein operates within pyrimidine metabolism; UMP biosynthesis via salvage pathway; UMP from uracil: step 1/1. Allosterically activated by GTP. Catalyzes the conversion of uracil and 5-phospho-alpha-D-ribose 1-diphosphate (PRPP) to UMP and diphosphate. The chain is Uracil phosphoribosyltransferase from Beutenbergia cavernae (strain ATCC BAA-8 / DSM 12333 / CCUG 43141 / JCM 11478 / NBRC 16432 / NCIMB 13614 / HKI 0122).